The primary structure comprises 236 residues: 2-C-methyl-D-erythritol 4-phosphate cytidylyltransferase (236 aa).

Belongs to the IspD/TarI cytidylyltransferase family. IspD subfamily.

The enzyme catalyses 2-C-methyl-D-erythritol 4-phosphate + CTP + H(+) = 4-CDP-2-C-methyl-D-erythritol + diphosphate. The protein operates within isoprenoid biosynthesis; isopentenyl diphosphate biosynthesis via DXP pathway; isopentenyl diphosphate from 1-deoxy-D-xylulose 5-phosphate: step 2/6. Its function is as follows. Catalyzes the formation of 4-diphosphocytidyl-2-C-methyl-D-erythritol from CTP and 2-C-methyl-D-erythritol 4-phosphate (MEP). The sequence is that of 2-C-methyl-D-erythritol 4-phosphate cytidylyltransferase from Burkholderia orbicola (strain AU 1054).